Reading from the N-terminus, the 260-residue chain is Cytochrome c oxidase subunit 3 (260 aa).

6 helical membrane passes run 30–50 (LILW…VLLV), 81–101 (GMIL…WAFF), 126–146 (FLVP…VTWA), 158–178 (AIQS…LQAW), 196–216 (FFVA…FLAV), and 239–259 (WYWH…YWWG).

The protein belongs to the cytochrome c oxidase subunit 3 family. Component of the cytochrome c oxidase (complex IV, CIV), a multisubunit enzyme composed of a catalytic core of 3 subunits and several supernumerary subunits. The complex exists as a monomer or a dimer and forms supercomplexes (SCs) in the inner mitochondrial membrane with ubiquinol-cytochrome c oxidoreductase (cytochrome b-c1 complex, complex III, CIII).

It localises to the mitochondrion inner membrane. The catalysed reaction is 4 Fe(II)-[cytochrome c] + O2 + 8 H(+)(in) = 4 Fe(III)-[cytochrome c] + 2 H2O + 4 H(+)(out). In terms of biological role, component of the cytochrome c oxidase, the last enzyme in the mitochondrial electron transport chain which drives oxidative phosphorylation. The respiratory chain contains 3 multisubunit complexes succinate dehydrogenase (complex II, CII), ubiquinol-cytochrome c oxidoreductase (cytochrome b-c1 complex, complex III, CIII) and cytochrome c oxidase (complex IV, CIV), that cooperate to transfer electrons derived from NADH and succinate to molecular oxygen, creating an electrochemical gradient over the inner membrane that drives transmembrane transport and the ATP synthase. Cytochrome c oxidase is the component of the respiratory chain that catalyzes the reduction of oxygen to water. Electrons originating from reduced cytochrome c in the intermembrane space (IMS) are transferred via the dinuclear copper A center (CU(A)) of subunit 2 and heme A of subunit 1 to the active site in subunit 1, a binuclear center (BNC) formed by heme A3 and copper B (CU(B)). The BNC reduces molecular oxygen to 2 water molecules using 4 electrons from cytochrome c in the IMS and 4 protons from the mitochondrial matrix. The chain is Cytochrome c oxidase subunit 3 (COIII) from Pisaster ochraceus (Ochre sea star).